The following is a 358-amino-acid chain: Diels-Alderase phmD (358 aa).

It belongs to the Diels-Alderase family.

The protein operates within mycotoxin biosynthesis. Diels-Alderase; part of the gene cluster that mediates the biosynthesis of the mycotoxins phomacins, leucine-derived cytochalasans with potent actin polymerization-inhibitory activities and monocot-specific antigerminative activities. The first step in the pathway is catalyzed by the hybrid PKS-NRPS phmA, assisted by the enoyl reductase phmE, that are responsible for fusion of the leucine precursor and the polyketide backbone to produce a 2-pyrrolidone intermediate. The polyketide synthase module (PKS) of phmA is responsible for the synthesis of the polyketide backbone and the downstream nonribosomal peptide synthetase (NRPS) amidates the carboxyl end of the polyketide with the leucine precursor. Because phmA lacks a designated enoylreductase (ER) domain, the required activity is provided the enoyl reductase phmE. Reduction by the hydrolyase phmG, followed by dehydration and intra-molecular Diels-Alder cyclization by the Diels-Alderase phmD then yield the required isoindolone-fused macrocycle. A number of oxidative steps catalyzed by the tailoring cytochrome P450 monooxygenase phmB, the FAD-linked oxidoreductase phmC and the short-chain dehydrogenase/reductase phmF, are further required to afford the final products, phomacin D and phomacin E. This Phaeosphaeria nodorum (strain SN15 / ATCC MYA-4574 / FGSC 10173) (Glume blotch fungus) protein is Diels-Alderase phmD.